A 147-amino-acid chain; its full sequence is UPAR/Ly6 domain-containing protein CG9338 (147 aa).

A signal peptide spans 1-23 (MVSSVKMILALTVLATVACTGYA). Residues 24 to 126 (IKCYQCDSLT…VCTEDECNGT (103 aa)) are Extracellular-facing. 5 disulfides stabilise this stretch: Cys26–Cys72, Cys29–Cys37, Cys51–Cys89, Cys101–Cys115, and Cys118–Cys123. An N-linked (GlcNAc...) asparagine glycan is attached at Asn68. Asn124 carries the GPI-anchor amidated asparagine lipid modification. Residues 125–147 (GTSSLAPIAGVILLFFGLARLLA) constitute a propeptide, removed in mature form. Residues 127–147 (SSLAPIAGVILLFFGLARLLA) form a helical membrane-spanning segment.

The protein belongs to the quiver family.

It is found in the cell membrane. May be involved in regulating neuron excitability. The sequence is that of UPAR/Ly6 domain-containing protein CG9338 from Drosophila melanogaster (Fruit fly).